Consider the following 242-residue polypeptide: MKKPRQQSCLFGVKAFEEAINNQVHIKLVNISIRHKKLIPLIEAKKINFQIHSTNWFNNQYRDINHQELVAVLDTNQLLIPLDQLVKVVENKKCSTLVMLDEIQDPYNFGAILRTCLASEVDGIIFKKNNQVPINNTVMKTSMGSVFYQNLVQVANLSYTITKLKEIGFWTVVSTLDPIWKPIDYRKVDFAKKILIVGNEDRGVNQLITKNADCRIKIPMNNKINSLNVSVALGIILFAWKN.

Residues glycine 198, isoleucine 218, and leucine 227 each coordinate S-adenosyl-L-methionine.

The protein belongs to the class IV-like SAM-binding methyltransferase superfamily. RNA methyltransferase TrmH family.

This is an uncharacterized protein from Mycoplasma genitalium (strain ATCC 33530 / DSM 19775 / NCTC 10195 / G37) (Mycoplasmoides genitalium).